A 539-amino-acid chain; its full sequence is Monocarboxylate transporter 8 (539 aa).

The disordered stretch occupies residues 1-92 (MALQSQASEE…VETRGTARGF (92 aa)). Ala2 carries the N-acetylalanine modification. The Cytoplasmic portion of the chain corresponds to 2–96 (ALQSQASEEA…GTARGFQPPE (95 aa)). A compositionally biased stretch (acidic residues) spans 31 to 41 (PESEPEPEPEP). Residues 42 to 64 (EPVPVPPPEPQPEPQPLPDPAPL) show a composition bias toward pro residues. Residues 97 to 117 (GGFGWVVVFAATWCNGSIFGI) form a helical membrane-spanning segment. The Extracellular portion of the chain corresponds to 118-143 (HNSVGILYSMLLEEEKEKNRQVEFQA). Residues 144–164 (AWVGALAMGMIFFCSPIVSIF) form a helical membrane-spanning segment. At 165 to 171 (TDRLGCR) the chain is on the cytoplasmic side. A helical membrane pass occupies residues 172–192 (ITATAGAAVAFIGLHTSSFTS). Over 193–200 (SLSLRYFT) the chain is Extracellular. The helical transmembrane segment at 201 to 221 (YGILFGCGCSFAFQPSLVILG) threads the bilayer. Residues 222-229 (HYFQRRLG) lie on the Cytoplasmic side of the membrane. Residues 230-250 (LANGVVSAGSSIFSMSFPFLI) form a helical membrane-spanning segment. The Extracellular portion of the chain corresponds to 251–258 (RMLGDKIK). Residues 259 to 279 (LAQTFQVLSTFMFVLMLLSLT) traverse the membrane as a helical segment. The Cytoplasmic portion of the chain corresponds to 280 to 322 (YRPLLPSSQDTPSKRGVRTLHQRFLAQLRKYFNMRVFRQRTYR). Residues 323–343 (IWAFGIAAAALGYFVPYVHLM) form a helical membrane-spanning segment. Residues 344-356 (KYVEEEFSEIKET) lie on the Extracellular side of the membrane. The helical transmembrane segment at 357–377 (WVLLVCIGATSGLGRLVSGHI) threads the bilayer. The Cytoplasmic portion of the chain corresponds to 378-386 (SDSIPGLKK). Residues 387–407 (IYLQVLSFLLLGLMSMMIPLC) form a helical membrane-spanning segment. Residues 408-409 (RD) are Extracellular-facing. The helical transmembrane segment at 410–430 (FGGLIVVCLFLGLCDGFFITI) threads the bilayer. Residues 431-447 (MAPIAFELVGPMQASQA) lie on the Cytoplasmic side of the membrane. A helical transmembrane segment spans residues 448–468 (IGYLLGMMALPMIAGPPIAGL). Residues 469-477 (LRNCFGDYH) are Extracellular-facing. Residues 478 to 498 (VAFYFAGVPPIIGAVILFFVP) traverse the membrane as a helical segment. Residues 499-539 (LMHQRMFKKEQRDSSKDKMLAPDPDPNGELLPGSPNPEEPI) are Cytoplasmic-facing. Residues 508 to 518 (EQRDSSKDKML) are compositionally biased toward basic and acidic residues. Positions 508-539 (EQRDSSKDKMLAPDPDPNGELLPGSPNPEEPI) are disordered.

It belongs to the major facilitator superfamily. Monocarboxylate porter (TC 2.A.1.13) family. In terms of assembly, monomer. Homodimer. Homooligomer. In terms of tissue distribution, highly expressed in liver and heart. In adult brain tissue expression is largely confined to endothelial cells of the blood-brain barrier (at protein level).

The protein resides in the cell membrane. It localises to the apical cell membrane. The enzyme catalyses 3,3',5-triiodo-L-thyronine(out) = 3,3',5-triiodo-L-thyronine(in). It carries out the reaction L-thyroxine(out) = L-thyroxine(in). The catalysed reaction is 3,3',5'-triiodo-L-thyronine(out) = 3,3',5'-triiodo-L-thyronine(in). It catalyses the reaction 3,3'-diiodo-L-thyronine(out) = 3,3'-diiodo-L-thyronine(in). Its function is as follows. Specific thyroid hormone transmembrane transporter, that mediates both uptake and efflux of thyroid hormones across the cell membrane independently of pH or a Na(+) gradient. Major substrates are the iodothyronines T3 and T4 and to a lesser extent rT3 and 3,3-diiodothyronine (3,3'-T2). Acts as an important mediator of thyroid hormone transport, especially T3, through the blood-brain barrier. This chain is Monocarboxylate transporter 8 (SLC16A2), found in Homo sapiens (Human).